Reading from the N-terminus, the 622-residue chain is Pyranose 2-oxidase (622 aa).

An N-terminal signal peptide occupies residues 1-28 (MSASSSDPFHSFAKTSFTSKAAKRATAH). The propeptide occupies 29–37 (SLPPLPGPG). At His-167 the chain carries Tele-8alpha-FAD histidine. Residues Gln-449 and His-451 each contribute to the substrate site. The active-site Proton acceptor is the His-546. The active site involves Asn-591.

Belongs to the GMC oxidoreductase family. Homotetramer. FAD is required as a cofactor.

Its subcellular location is the periplasm. The catalysed reaction is D-glucose + O2 = 2-dehydro-D-glucose + H2O2. Its function is as follows. Catalyzes the oxidation of various aldopyranoses and disaccharides on carbon-2 to the corresponding 2-keto sugars concomitant with the reduction of O(2) to H(2)O(2). Plays an important role in lignin degradation of wood rot fungi by supplying the essential cosubstrate H(2)O(2) for the ligninolytic peroxidases, lignin peroxidase and manganese-dependent peroxidase. The preferred substrate is D-glucose which is converted to 2-dehydro-D-glucose, an intermediate of a secondary metabolic pathway leading to the antibiotic cortalcerone. Also acts on D-xylose, together with D-glucose the major sugars derived from wood, on L-sorbose, D-galactose and 1,5-anhydroglucitol, a diagnostic marker of diabetes mellitus. This is Pyranose 2-oxidase (P2OX) from Trametes hirsuta (White-rot fungus).